The sequence spans 290 residues: MAALQEKKSCSQRMEEFQRYCWNPDTGQMLGRTLSRWVWISLYYVAFYVVMTGIFALCIYTLMCTLDPYTPDYQDQLKSPGVTLRPDVYGEKGLDISYNVSDNRTWVDLVNILHNFLEGYSPTSQEDNINCTSEKYFFQDVFGAPNHTKFSCKFMADMLQNCSGLTDPNFGFAEGKPCFIIKMNRIVNFLPSNSTAPRADCTFLDQHKDDRPLQVEYYPPNGTFSLRYFPYYGKKAQPHYSNPLVAAKLLNVPRNTEVLIVCKILADYVTFDNPHDPYEGKVEFKLTIQQ.

The Cytoplasmic segment spans residues 1 to 36 (MAALQEKKSCSQRMEEFQRYCWNPDTGQMLGRTLSR). Residues 37–57 (WVWISLYYVAFYVVMTGIFAL) form a helical; Signal-anchor for type II membrane protein membrane-spanning segment. Over 58-290 (CIYTLMCTLD…KVEFKLTIQQ (233 aa)) the chain is Extracellular. N-linked (GlcNAc...) asparagine glycosylation is found at Asn99, Asn103, Asn130, Asn146, and Asn161. Cys131 and Cys152 are oxidised to a cystine. Cysteines 162 and 178 form a disulfide. 2 N-linked (GlcNAc...) asparagine glycosylation sites follow: Asn193 and Asn221. An immunoglobulin-like region spans residues 194-290 (STAPRADCTF…KVEFKLTIQQ (97 aa)). A disulfide bond links Cys201 and Cys262.

The protein belongs to the X(+)/potassium ATPases subunit beta family. As to quaternary structure, the ATPase pump is composed of two subunits: alpha (catalytic) and beta (regulatory). Interacts with alpha subunit ATP12A; this interaction is required for the formation of a functionally active pump and targeting at the plasma membrane. Interacts (via N-terminus) with alpha subunit ATP4A (via the P-domain). Post-translationally, N-glycosylation is necessary for assembly and functional expression of the pump at the plasma membrane.

It is found in the apical cell membrane. It localises to the cell membrane. In terms of biological role, the beta subunit of the gastric H(+)/K(+) ATPase pump which transports H(+) ions in exchange for K(+) ions across the apical membrane of parietal cells. Plays a structural and regulatory role in the assembly and membrane targeting of a functionally active pump. Within a transport cycle, the transfer of a H(+) ion across the membrane is coupled to ATP hydrolysis and is associated with a transient phosphorylation of the alpha subunit that shifts the pump conformation from inward-facing (E1) to outward-facing state (E2). Interacts with the phosphorylation domain of the alpha subunit and functions as a ratchet, stabilizing the lumenal-open E2 conformation and preventing the reverse reaction of the transport cycle. This chain is Potassium-transporting ATPase subunit beta (ATP4B), found in Canis lupus familiaris (Dog).